The primary structure comprises 95 residues: Co-chaperonin GroES (95 aa).

The protein belongs to the GroES chaperonin family. In terms of assembly, heptamer of 7 subunits arranged in a ring. Interacts with the chaperonin GroEL.

It is found in the cytoplasm. Together with the chaperonin GroEL, plays an essential role in assisting protein folding. The GroEL-GroES system forms a nano-cage that allows encapsulation of the non-native substrate proteins and provides a physical environment optimized to promote and accelerate protein folding. GroES binds to the apical surface of the GroEL ring, thereby capping the opening of the GroEL channel. The chain is Co-chaperonin GroES from Xylella fastidiosa (strain M23).